The sequence spans 353 residues: Photosystem II protein D1 (353 aa).

An N-acetylthreonine modification is found at threonine 2. Threonine 2 bears the Phosphothreonine mark. Transmembrane regions (helical) follow at residues 29–46 (YIGWFGVLMIPTLLTATS), 118–133 (HFLLGVACYMGREWEL), and 142–156 (WIAVAYSAPVAAAAA). Histidine 118 contacts chlorophyll a. Tyrosine 126 lines the pheophytin a pocket. Aspartate 170 and glutamate 189 together coordinate [CaMn4O5] cluster. Residues 197 to 218 (FHMLGVAGVFGGSLFSAMHGSL) traverse the membrane as a helical segment. A chlorophyll a-binding site is contributed by histidine 198. A quinone is bound by residues histidine 215 and 264-265 (SF). Histidine 215 provides a ligand contact to Fe cation. Histidine 272 serves as a coordination point for Fe cation. Residues 274–288 (FLAAWPVVGIWFTAL) form a helical membrane-spanning segment. Positions 332, 333, 342, and 344 each coordinate [CaMn4O5] cluster. Positions 345 to 353 (AVEAPSING) are excised as a propeptide.

This sequence belongs to the reaction center PufL/M/PsbA/D family. As to quaternary structure, PSII is composed of 1 copy each of membrane proteins PsbA, PsbB, PsbC, PsbD, PsbE, PsbF, PsbH, PsbI, PsbJ, PsbK, PsbL, PsbM, PsbT, PsbX, PsbY, PsbZ, Psb30/Ycf12, at least 3 peripheral proteins of the oxygen-evolving complex and a large number of cofactors. It forms dimeric complexes. It depends on The D1/D2 heterodimer binds P680, chlorophylls that are the primary electron donor of PSII, and subsequent electron acceptors. It shares a non-heme iron and each subunit binds pheophytin, quinone, additional chlorophylls, carotenoids and lipids. D1 provides most of the ligands for the Mn4-Ca-O5 cluster of the oxygen-evolving complex (OEC). There is also a Cl(-1) ion associated with D1 and D2, which is required for oxygen evolution. The PSII complex binds additional chlorophylls, carotenoids and specific lipids. as a cofactor. Tyr-161 forms a radical intermediate that is referred to as redox-active TyrZ, YZ or Y-Z. In terms of processing, C-terminally processed by CTPA; processing is essential to allow assembly of the oxygen-evolving complex and thus photosynthetic growth.

The protein resides in the plastid. The protein localises to the chloroplast thylakoid membrane. It carries out the reaction 2 a plastoquinone + 4 hnu + 2 H2O = 2 a plastoquinol + O2. Functionally, photosystem II (PSII) is a light-driven water:plastoquinone oxidoreductase that uses light energy to abstract electrons from H(2)O, generating O(2) and a proton gradient subsequently used for ATP formation. It consists of a core antenna complex that captures photons, and an electron transfer chain that converts photonic excitation into a charge separation. The D1/D2 (PsbA/PsbD) reaction center heterodimer binds P680, the primary electron donor of PSII as well as several subsequent electron acceptors. In Vitis vinifera (Grape), this protein is Photosystem II protein D1.